A 470-amino-acid chain; its full sequence is Siroheme synthase (470 aa).

The precorrin-2 dehydrogenase /sirohydrochlorin ferrochelatase stretch occupies residues 1–203 (MEFFPIFLKL…GDEAAARAEM (203 aa)). Residues 22–23 (EV) and 43–44 (PE) each bind NAD(+). Ser128 carries the phosphoserine modification. The segment at 216–470 (GAVYLVGAGP…ENSAVTIQED (255 aa)) is uroporphyrinogen-III C-methyltransferase. Pro225 serves as a coordination point for S-adenosyl-L-methionine. The Proton acceptor role is filled by Asp248. Residue Lys270 is the Proton donor of the active site. S-adenosyl-L-methionine contacts are provided by residues 301-303 (GGD), Met383, and Ala412.

This sequence in the N-terminal section; belongs to the precorrin-2 dehydrogenase / sirohydrochlorin ferrochelatase family. It in the C-terminal section; belongs to the precorrin methyltransferase family.

It catalyses the reaction uroporphyrinogen III + 2 S-adenosyl-L-methionine = precorrin-2 + 2 S-adenosyl-L-homocysteine + H(+). The enzyme catalyses precorrin-2 + NAD(+) = sirohydrochlorin + NADH + 2 H(+). The catalysed reaction is siroheme + 2 H(+) = sirohydrochlorin + Fe(2+). Its pathway is cofactor biosynthesis; adenosylcobalamin biosynthesis; precorrin-2 from uroporphyrinogen III: step 1/1. It participates in cofactor biosynthesis; adenosylcobalamin biosynthesis; sirohydrochlorin from precorrin-2: step 1/1. It functions in the pathway porphyrin-containing compound metabolism; siroheme biosynthesis; precorrin-2 from uroporphyrinogen III: step 1/1. The protein operates within porphyrin-containing compound metabolism; siroheme biosynthesis; siroheme from sirohydrochlorin: step 1/1. Its pathway is porphyrin-containing compound metabolism; siroheme biosynthesis; sirohydrochlorin from precorrin-2: step 1/1. Its function is as follows. Multifunctional enzyme that catalyzes the SAM-dependent methylations of uroporphyrinogen III at position C-2 and C-7 to form precorrin-2 via precorrin-1. Then it catalyzes the NAD-dependent ring dehydrogenation of precorrin-2 to yield sirohydrochlorin. Finally, it catalyzes the ferrochelation of sirohydrochlorin to yield siroheme. The sequence is that of Siroheme synthase from Chromobacterium violaceum (strain ATCC 12472 / DSM 30191 / JCM 1249 / CCUG 213 / NBRC 12614 / NCIMB 9131 / NCTC 9757 / MK).